The following is a 399-amino-acid chain: Oligoribonuclease NrnB (399 aa).

It depends on Mn(2+) as a cofactor. Co(2+) is required as a cofactor. Requires Mg(2+) as cofactor.

It localises to the cytoplasm. In terms of biological role, degrades RNA oligonucleotides with a length of 5 nucleotides in a 3'- to 5'-direction. Less active on shorter RNA oligonucleotides and on those with a length of 24 nucleotides. Prefers RNA oligonucleotides containing adenines rather than cytosines. In Bacillus subtilis (strain 168), this protein is Oligoribonuclease NrnB (nrnB).